A 557-amino-acid chain; its full sequence is Formate--tetrahydrofolate ligase (557 aa).

ATP is bound at residue 44 to 51 (TPLGEGKS).

It belongs to the formate--tetrahydrofolate ligase family.

It catalyses the reaction (6S)-5,6,7,8-tetrahydrofolate + formate + ATP = (6R)-10-formyltetrahydrofolate + ADP + phosphate. Its pathway is one-carbon metabolism; tetrahydrofolate interconversion. The polypeptide is Formate--tetrahydrofolate ligase (Desulfotalea psychrophila (strain LSv54 / DSM 12343)).